The sequence spans 111 residues: ATP-dependent Clp protease adapter protein ClpS (111 aa).

The protein belongs to the ClpS family. In terms of assembly, binds to the N-terminal domain of the chaperone ClpA.

Functionally, involved in the modulation of the specificity of the ClpAP-mediated ATP-dependent protein degradation. This chain is ATP-dependent Clp protease adapter protein ClpS, found in Legionella pneumophila (strain Paris).